The chain runs to 193 residues: Ion-translocating oxidoreductase complex subunit A (193 aa).

6 helical membrane-spanning segments follow: residues 5–25, 39–59, 62–82, 102–122, 134–154, and 171–191; these read LMLF…FLGL, LGMG…AWLI, FILL…FIIA, LLGI…VALL, ALYG…FAAI, and SIAL…TGLV.

It belongs to the NqrDE/RnfAE family. In terms of assembly, the complex is composed of six subunits: RnfA, RnfB, RnfC, RnfD, RnfE and RnfG.

It localises to the cell inner membrane. Its function is as follows. Part of a membrane-bound complex that couples electron transfer with translocation of ions across the membrane. This Sodalis glossinidius (strain morsitans) protein is Ion-translocating oxidoreductase complex subunit A.